We begin with the raw amino-acid sequence, 889 residues long: Chitin synthase I (889 aa).

A glycan (N-linked (GlcNAc...) asparagine) is linked at N43. Residues 94 to 138 form a disordered region; the sequence is GEYFDGYNQGHPPQEHQAYDDDGQPLIEDQHGYSDNPQHQTQTPA. Over residues 126-137 the composition is skewed to polar residues; sequence YSDNPQHQTQTP. N199 carries an N-linked (GlcNAc...) asparagine glycan. Transmembrane regions (helical) follow at residues 431–451, 530–550, 560–580, 606–626, 641–661, 687–707, 716–736, 815–835, and 861–881; these read SAFGFISVLPGAFSAYRYVAL, RWLNGSFFAAIYAIAHFYEFF, LAFFVEFVFNTINMIFAWFAI, ILGVVFTWLYGVFLMTCFVLS, MVWFWAIIMIYLMFAAIFIAV, TLIISVMSTFGIWLIASIIMF, FIQYMLLTPTYTNVLNVYAFC, GVVLIWMITNFALAALVLSSA, and IVLWSVAVLSGFKFLGAMWFL.

Belongs to the chitin synthase family. Class I subfamily. Expressed in hyphal bodies.

It is found in the cell membrane. The enzyme catalyses [(1-&gt;4)-N-acetyl-beta-D-glucosaminyl](n) + UDP-N-acetyl-alpha-D-glucosamine = [(1-&gt;4)-N-acetyl-beta-D-glucosaminyl](n+1) + UDP + H(+). In terms of biological role, polymerizes chitin, a structural polymer of the cell wall and septum, by transferring the sugar moiety of UDP-GlcNAc to the non-reducing end of the growing chitin polymer. Contributes to the production of conidia and the ability of fungal conidia to germinate. Not involved in fungal stress tolerances. The chain is Chitin synthase I from Metarhizium acridum (strain CQMa 102).